The following is a 313-amino-acid chain: Olfactory receptor 4Q3 (313 aa).

The Extracellular portion of the chain corresponds to methionine 1–leucine 25. An N-linked (GlcNAc...) asparagine glycan is attached at asparagine 8. A helical membrane pass occupies residues phenylalanine 26 to valine 49. At glutamine 50–serine 58 the chain is on the cytoplasmic side. A helical membrane pass occupies residues proline 59 to proline 80. Over lysine 81–glutamine 101 the chain is Extracellular. Cysteine 98 and cysteine 190 are joined by a disulfide. A helical membrane pass occupies residues isoleucine 102 to tyrosine 121. Residues aspartate 122 to glutamine 140 lie on the Cytoplasmic side of the membrane. A helical membrane pass occupies residues leucine 141–methionine 159. At glutamine 160 to valine 196 the chain is on the extracellular side. The helical transmembrane segment at glutamate 197–alanine 220 threads the bilayer. The Cytoplasmic segment spans residues isoleucine 221–lysine 236. The chain crosses the membrane as a helical span at residues valine 237–tyrosine 259. Residues leucine 260 to lysine 270 lie on the Extracellular side of the membrane. The helical transmembrane segment at isoleucine 271–leucine 290 threads the bilayer. Over arginine 291–cysteine 313 the chain is Cytoplasmic.

It belongs to the G-protein coupled receptor 1 family.

Its subcellular location is the cell membrane. Its function is as follows. Odorant receptor. The polypeptide is Olfactory receptor 4Q3 (OR4Q3) (Homo sapiens (Human)).